Reading from the N-terminus, the 325-residue chain is MIARIWSGESPLWRLLLPLSWLYGLVSGAIRLSYKLGFKRAWRAPVPVVVVGNLTAGGNGKTPVVIWLVEKLQQRGVRVGVVSRGYGGKAAAYPLLLTPETTTAEAGDEPVLIYQRTGAPVAVAPERAAAVKAILAAHNLQIIITDDGLQHYRLARDIEIVVIDGVRRFGNGWWLPAGPMRERASRLKTVDAAIVNGGVARAGEIPMQLAPGLAVNLRTGARCDVAQLSNIVAMAGIGHPPRFFATLEACGAHPQKCVPLADHQTLAPADVQALVGEGQTLVMTEKDAVKCRAFAEDNWWFLPVDARLSGEQPDKLLEHITSLVR.

55–62 (TAGGNGKT) contributes to the ATP binding site.

Belongs to the LpxK family.

The catalysed reaction is a lipid A disaccharide + ATP = a lipid IVA + ADP + H(+). It functions in the pathway glycolipid biosynthesis; lipid IV(A) biosynthesis; lipid IV(A) from (3R)-3-hydroxytetradecanoyl-[acyl-carrier-protein] and UDP-N-acetyl-alpha-D-glucosamine: step 6/6. Its function is as follows. Transfers the gamma-phosphate of ATP to the 4'-position of a tetraacyldisaccharide 1-phosphate intermediate (termed DS-1-P) to form tetraacyldisaccharide 1,4'-bis-phosphate (lipid IVA). This is Tetraacyldisaccharide 4'-kinase from Salmonella enteritidis PT4 (strain P125109).